The sequence spans 245 residues: RNA polymerase sigma factor SigI5 (245 aa).

The Polymerase core binding motif lies at 60–73 (DEYSIGLMAFNEAI). The H-T-H motif DNA-binding region spans 202 to 221 (MKELSKIIDVHPKTVERNRA).

The protein belongs to the sigma-70 factor family. SigI subfamily. Interacts with RsgI5.

The protein resides in the cytoplasm. Its activity is regulated as follows. Negatively regulated by the anti-sigma-I factor RsgI5. Binding of the polysaccharide substrate to RsgI5 may lead to the release and activation of SigI5. Functionally, sigma factors are initiation factors that promote the attachment of RNA polymerase to specific initiation sites and are then released. This sigma factor is involved in regulation of cellulosomal genes via an external polysaccharide-sensing mechanism. This Acetivibrio thermocellus (strain ATCC 27405 / DSM 1237 / JCM 9322 / NBRC 103400 / NCIMB 10682 / NRRL B-4536 / VPI 7372) (Clostridium thermocellum) protein is RNA polymerase sigma factor SigI5.